The primary structure comprises 326 residues: Ribosomal RNA small subunit methyltransferase H (326 aa).

S-adenosyl-L-methionine-binding positions include glycine 35–tyrosine 37, aspartate 53, phenylalanine 80, aspartate 101, and glutamine 108. Residues glutamate 260–arginine 306 are disordered.

The protein belongs to the methyltransferase superfamily. RsmH family.

It localises to the cytoplasm. The enzyme catalyses cytidine(1402) in 16S rRNA + S-adenosyl-L-methionine = N(4)-methylcytidine(1402) in 16S rRNA + S-adenosyl-L-homocysteine + H(+). In terms of biological role, specifically methylates the N4 position of cytidine in position 1402 (C1402) of 16S rRNA. The protein is Ribosomal RNA small subunit methyltransferase H of Rhodospirillum rubrum (strain ATCC 11170 / ATH 1.1.1 / DSM 467 / LMG 4362 / NCIMB 8255 / S1).